We begin with the raw amino-acid sequence, 304 residues long: Non-specific ribonucleoside hydrolase RihC (304 aa).

His233 is a catalytic residue.

The protein belongs to the IUNH family. RihC subfamily.

Its function is as follows. Hydrolyzes both purine and pyrimidine ribonucleosides with a broad-substrate specificity. The protein is Non-specific ribonucleoside hydrolase RihC of Escherichia coli O157:H7.